Consider the following 128-residue polypeptide: Sulfurtransferase TusD (128 aa).

Cys78 serves as the catalytic Cysteine persulfide intermediate.

This sequence belongs to the DsrE/TusD family. In terms of assembly, heterohexamer, formed by a dimer of trimers. The hexameric TusBCD complex contains 2 copies each of TusB, TusC and TusD. The TusBCD complex interacts with TusE.

The protein localises to the cytoplasm. Part of a sulfur-relay system required for 2-thiolation of 5-methylaminomethyl-2-thiouridine (mnm(5)s(2)U) at tRNA wobble positions. Accepts sulfur from TusA and transfers it in turn to TusE. This Escherichia coli (strain 55989 / EAEC) protein is Sulfurtransferase TusD.